The sequence spans 400 residues: Probable glucan endo-1,6-beta-glucosidase B (400 aa).

The signal sequence occupies residues 1–17 (MIRRLAALSALSGLATA). N-linked (GlcNAc...) asparagine glycosylation occurs at N30. The Proton donor role is filled by E219. N272 carries an N-linked (GlcNAc...) asparagine glycan. E320 acts as the Nucleophile in catalysis.

This sequence belongs to the glycosyl hydrolase 5 (cellulase A) family.

It is found in the secreted. It catalyses the reaction Random hydrolysis of (1-&gt;6)-linkages in (1-&gt;6)-beta-D-glucans.. Its function is as follows. Beta-glucanases participate in the metabolism of beta-glucan, the main structural component of the cell wall. Acts on lutean, pustulan and 1,6-oligo-beta-D-glucosides. In Neosartorya fischeri (strain ATCC 1020 / DSM 3700 / CBS 544.65 / FGSC A1164 / JCM 1740 / NRRL 181 / WB 181) (Aspergillus fischerianus), this protein is Probable glucan endo-1,6-beta-glucosidase B (exgB).